We begin with the raw amino-acid sequence, 126 residues long: Protein ApaG (126 aa).

In terms of domain architecture, ApaG spans 2-126 (SALDTSIRVE…FRLTTPGLLH (125 aa)).

The protein is Protein ApaG of Shewanella baltica (strain OS195).